Here is a 427-residue protein sequence, read N- to C-terminus: Glutamate-1-semialdehyde 2,1-aminomutase (427 aa).

Residue lysine 265 is modified to N6-(pyridoxal phosphate)lysine.

Belongs to the class-III pyridoxal-phosphate-dependent aminotransferase family. HemL subfamily. As to quaternary structure, homodimer. Requires pyridoxal 5'-phosphate as cofactor.

It localises to the cytoplasm. It carries out the reaction (S)-4-amino-5-oxopentanoate = 5-aminolevulinate. It participates in porphyrin-containing compound metabolism; protoporphyrin-IX biosynthesis; 5-aminolevulinate from L-glutamyl-tRNA(Glu): step 2/2. The polypeptide is Glutamate-1-semialdehyde 2,1-aminomutase (Photorhabdus laumondii subsp. laumondii (strain DSM 15139 / CIP 105565 / TT01) (Photorhabdus luminescens subsp. laumondii)).